We begin with the raw amino-acid sequence, 152 residues long: MSRPRRELPQPLKRLLKLRLLLKRKKPEFVRIDQWRYKRIEDSGWRNTRSIDNKIRRKWKGWPKPVEVGYRKPAAVRGLHPSGFVEVLVHNVEELAKLDPKTHAIRIGRTVGLRKRIEIVKRAREMGFYVLNPGKRVEEALKKELNTAQTGQ.

The protein belongs to the eukaryotic ribosomal protein eL32 family.

The polypeptide is Large ribosomal subunit protein eL32 (rpl32e) (Pyrobaculum aerophilum (strain ATCC 51768 / DSM 7523 / JCM 9630 / CIP 104966 / NBRC 100827 / IM2)).